The chain runs to 785 residues: E3 UFM1-protein ligase 1 homolog (785 aa).

The segment at 405 to 483 is disordered; the sequence is ASFQDQDDDG…GGGGGNKKTV (79 aa).

Belongs to the UFL1 family.

In terms of biological role, E3 UFM1-protein ligase that mediates ufmylation of target proteins. The protein is E3 UFM1-protein ligase 1 homolog of Drosophila pseudoobscura pseudoobscura (Fruit fly).